A 672-amino-acid chain; its full sequence is Spermatid perinuclear RNA-binding protein (672 aa).

Positions R5–L363 constitute a DZF domain. A disordered region spans residues G349–K371. Over residues R357 to K371 the composition is skewed to basic and acidic residues. Residues D387 to Y453 enclose the DRBM 1 domain. Positions D467–N476 are enriched in basic and acidic residues. The disordered stretch occupies residues D467–P514. Residues D477 to T497 show a composition bias toward low complexity. The region spanning S510 to S576 is the DRBM 2 domain. Asymmetric dimethylarginine occurs at positions 612 and 617.

As to quaternary structure, interacts with EIF2AK2. Associates with microtubules; it is unsure whether such interaction is direct or indirect. Isoform 2 is expressed in spermatocytes (at protein level). Expressed in testis, thymus, ovary, liver, kidney, heart, spleen and brain. Expressed in cortex, dentate gyrus and Purkinje cell layer and granule cells of the cerebellum.

It is found in the cytoplasm. It localises to the cytoskeleton. In terms of biological role, involved in spermatogenesis and sperm function. Plays a role in regulation of cell growth. Binds to double-stranded DNA and RNA. Binds most efficiently to poly(I:C) RNA than to poly(dI:dC) DNA. Also binds to single-stranded poly(G) RNA. Binds non-specifically to the mRNA PRM1 3'-UTR and adenovirus VA RNA. This is Spermatid perinuclear RNA-binding protein (Strbp) from Mus musculus (Mouse).